The chain runs to 230 residues: Ribosomal RNA small subunit methyltransferase G (230 aa).

S-adenosyl-L-methionine-binding positions include G80, F85, 131-132, and R145; that span reads VE.

Belongs to the methyltransferase superfamily. RNA methyltransferase RsmG family.

Its subcellular location is the cytoplasm. The catalysed reaction is guanosine(527) in 16S rRNA + S-adenosyl-L-methionine = N(7)-methylguanosine(527) in 16S rRNA + S-adenosyl-L-homocysteine. Specifically methylates the N7 position of guanine in position 527 of 16S rRNA. This Novosphingobium aromaticivorans (strain ATCC 700278 / DSM 12444 / CCUG 56034 / CIP 105152 / NBRC 16084 / F199) protein is Ribosomal RNA small subunit methyltransferase G.